Here is a 153-residue protein sequence, read N- to C-terminus: Glycosylation-dependent cell adhesion molecule 1 (153 aa).

An N-terminal signal peptide occupies residues 1–18 (MKFLCVLLLASLAATSLA). Thr-34 is a glycosylation site (O-linked (GalNAc...) threonine; partial). Residues Ser-47, Ser-52, Ser-56, Ser-58, and Ser-64 each carry the phosphoserine modification. Ser-78 is a glycosylation site (O-linked (HexNAc...) serine). Asn-95 carries an N-linked (GlcNAc...) asparagine glycan. Residues 95 to 115 (NATLGSEETTEHTPSDASTTE) form a disordered region. O-linked (GalNAc...) threonine glycosylation is present at Thr-104.

This sequence belongs to the PP3/GlyCAM-1 family. In terms of tissue distribution, highly and specifically expressed in the lactating mammary gland.

It is found in the membrane. The chain is Glycosylation-dependent cell adhesion molecule 1 (GLYCAM1) from Bos taurus (Bovine).